Consider the following 686-residue polypeptide: DNA topoisomerase 1 (686 aa).

In terms of domain architecture, Toprim spans 1-141 (MILIIAEKPN…KRMKFSALTK (141 aa)). Mg(2+) is bound by residues glutamate 7 and aspartate 107. The Topo IA-type catalytic domain occupies 156–574 (NFGMANAGIA…EAKERLTKIL (419 aa)). Positions 196–201 (STGRVQ) are interaction with DNA. The active-site O-(5'-phospho-DNA)-tyrosine intermediate is the tyrosine 317. The C4-type 1 zinc-finger motif lies at 606–634 (CPKCGGDLIVKYNKKTGKRFVGCSNWPKC). A C4-type 2; atypical zinc finger spans residues 653–678 (CCNGAPVVIIREEDGREFEICLDINC).

It belongs to the type IA topoisomerase family. Monomer. Mg(2+) serves as cofactor.

The catalysed reaction is ATP-independent breakage of single-stranded DNA, followed by passage and rejoining.. Its function is as follows. Releases the supercoiling and torsional tension of DNA, which is introduced during the DNA replication and transcription, by transiently cleaving and rejoining one strand of the DNA duplex. Introduces a single-strand break via transesterification at a target site in duplex DNA. The scissile phosphodiester is attacked by the catalytic tyrosine of the enzyme, resulting in the formation of a DNA-(5'-phosphotyrosyl)-enzyme intermediate and the expulsion of a 3'-OH DNA strand. The free DNA strand then undergoes passage around the unbroken strand, thus removing DNA supercoils. Finally, in the religation step, the DNA 3'-OH attacks the covalent intermediate to expel the active-site tyrosine and restore the DNA phosphodiester backbone. The sequence is that of DNA topoisomerase 1 from Pyrococcus horikoshii (strain ATCC 700860 / DSM 12428 / JCM 9974 / NBRC 100139 / OT-3).